The following is a 164-amino-acid chain: Cytochrome c oxidase subunit 4, mitochondrial (164 aa).

A mitochondrion-targeting transit peptide spans M1–R33. The Zn(2+) site is built by C120, H128, C143, and C146.

The protein belongs to the cytochrome c oxidase subunit 5B family. In terms of assembly, component of the cytochrome c oxidase (complex IV, CIV), a multisubunit enzyme composed of a catalytic core of 3 subunits and several supernumerary subunits. The complex exists as a monomer or a dimer and forms supercomplexes (SCs) in the inner mitochondrial membrane with ubiquinol-cytochrome c oxidoreductase (cytochrome b-c1 complex, complex III, CIII).

The protein resides in the mitochondrion inner membrane. Its pathway is energy metabolism; oxidative phosphorylation. Its function is as follows. Component of the cytochrome c oxidase, the last enzyme in the mitochondrial electron transport chain which drives oxidative phosphorylation. The respiratory chain contains 3 multisubunit complexes succinate dehydrogenase (complex II, CII), ubiquinol-cytochrome c oxidoreductase (cytochrome b-c1 complex, complex III, CIII) and cytochrome c oxidase (complex IV, CIV), that cooperate to transfer electrons derived from NADH and succinate to molecular oxygen, creating an electrochemical gradient over the inner membrane that drives transmembrane transport and the ATP synthase. Cytochrome c oxidase is the component of the respiratory chain that catalyzes the reduction of oxygen to water. Electrons originating from reduced cytochrome c in the intermembrane space (IMS) are transferred via the dinuclear copper A center (CU(A)) of subunit 2 and heme A of subunit 1 to the active site in subunit 1, a binuclear center (BNC) formed by heme A3 and copper B (CU(B)). The BNC reduces molecular oxygen to 2 water molecules using 4 electrons from cytochrome c in the IMS and 4 protons from the mitochondrial matrix. In Schizosaccharomyces pombe (strain 972 / ATCC 24843) (Fission yeast), this protein is Cytochrome c oxidase subunit 4, mitochondrial (cox4).